The primary structure comprises 247 residues: Probable dihydroorotate dehydrogenase B (NAD(+)), electron transfer subunit (247 aa).

The region spanning 1 to 87 is the FAD-binding FR-type domain; sequence MLRRVMIKET…RGPYGNGFKS (87 aa). [2Fe-2S] cluster-binding residues include C200, C205, C208, and C216.

This sequence belongs to the PyrK family. In terms of assembly, heterotetramer of 2 PyrK and 2 PyrD type B subunits. [2Fe-2S] cluster serves as cofactor. Requires FAD as cofactor.

It functions in the pathway pyrimidine metabolism; UMP biosynthesis via de novo pathway; orotate from (S)-dihydroorotate (NAD(+) route): step 1/1. Its function is as follows. Responsible for channeling the electrons from the oxidation of dihydroorotate from the FMN redox center in the PyrD type B subunit to the ultimate electron acceptor NAD(+). The polypeptide is Probable dihydroorotate dehydrogenase B (NAD(+)), electron transfer subunit (Pyrococcus abyssi (strain GE5 / Orsay)).